The following is a 513-amino-acid chain: Sterol 14-alpha demethylase rstn2 (513 aa).

Residues 3–23 (WPLIGAYALLAFVAIIALNVT) traverse the membrane as a helical segment. C453 is a binding site for heme.

Belongs to the cytochrome P450 family. It depends on heme as a cofactor.

It is found in the membrane. It carries out the reaction a 14alpha-methyl steroid + 3 reduced [NADPH--hemoprotein reductase] + 3 O2 = a Delta(14) steroid + formate + 3 oxidized [NADPH--hemoprotein reductase] + 4 H2O + 4 H(+). The catalysed reaction is a 14alpha-methyl steroid + reduced [NADPH--hemoprotein reductase] + O2 = a 14alpha-hydroxymethyl steroid + oxidized [NADPH--hemoprotein reductase] + H2O + H(+). The enzyme catalyses a 14alpha-hydroxymethyl steroid + reduced [NADPH--hemoprotein reductase] + O2 = a 14alpha-formyl steroid + oxidized [NADPH--hemoprotein reductase] + 2 H2O + H(+). It catalyses the reaction a 14alpha-formyl steroid + reduced [NADPH--hemoprotein reductase] + O2 = a Delta(14) steroid + formate + oxidized [NADPH--hemoprotein reductase] + H2O + 2 H(+). It carries out the reaction lanosterol + 3 reduced [NADPH--hemoprotein reductase] + 3 O2 = 4,4-dimethyl-5alpha-cholesta-8,14,24-trien-3beta-ol + formate + 3 oxidized [NADPH--hemoprotein reductase] + 4 H2O + 4 H(+). The catalysed reaction is lanosterol + reduced [NADPH--hemoprotein reductase] + O2 = 32-hydroxylanosterol + oxidized [NADPH--hemoprotein reductase] + H2O + H(+). The enzyme catalyses 32-hydroxylanosterol + reduced [NADPH--hemoprotein reductase] + O2 = 32-oxolanosterol + oxidized [NADPH--hemoprotein reductase] + 2 H2O + H(+). It catalyses the reaction 32-oxolanosterol + reduced [NADPH--hemoprotein reductase] + O2 = 4,4-dimethyl-5alpha-cholesta-8,14,24-trien-3beta-ol + formate + oxidized [NADPH--hemoprotein reductase] + H2O + 2 H(+). It carries out the reaction eburicol + 3 reduced [NADPH--hemoprotein reductase] + 3 O2 = 14-demethyleburicol + formate + 3 oxidized [NADPH--hemoprotein reductase] + 4 H2O + 4 H(+). The catalysed reaction is eburicol + reduced [NADPH--hemoprotein reductase] + O2 = 32-hydroxyeburicol + oxidized [NADPH--hemoprotein reductase] + H2O + H(+). The enzyme catalyses 32-hydroxyeburicol + reduced [NADPH--hemoprotein reductase] + O2 = 32-oxoeburicol + oxidized [NADPH--hemoprotein reductase] + 2 H2O + H(+). It catalyses the reaction 32-oxoeburicol + reduced [NADPH--hemoprotein reductase] + O2 = 14-demethyleburicol + formate + oxidized [NADPH--hemoprotein reductase] + H2O + 2 H(+). It functions in the pathway steroid biosynthesis; sterol biosynthesis. Its function is as follows. Sterol 14-alpha demethylase; part of the gene cluster that mediates the biosynthesis of the tetrahydropyranyl antifungal agent restricticin that acts as an inhibitor of CYP51 and blocks the ergosterol biosynthesis. Sterol 14-alpha-demethylase plays a critical role in the biosynthesis of ergosterol, the major sterol component in fungal membranes that participates in a variety of functions. Rtsn2 acts as a self-resistant CYP51 that contains mutations found in CYP51s isolated from azole resistance strains and that is not inhibited by the final product of the cluster, restricticin. In Aspergillus nomiae NRRL (strain ATCC 15546 / NRRL 13137 / CBS 260.88 / M93), this protein is Sterol 14-alpha demethylase rstn2.